A 434-amino-acid polypeptide reads, in one-letter code: Beta-enolase (434 aa).

Ala-2 carries the post-translational modification N-acetylalanine. The residue at position 72 (Thr-72) is a Phosphothreonine. Ser-83 and Ser-157 each carry phosphoserine. Residues His-158 and Glu-167 each coordinate substrate. Phosphoserine is present on Ser-176. Thr-205 is subject to Phosphothreonine. Catalysis depends on Glu-210, which acts as the Proton donor. Thr-229 bears the Phosphothreonine mark. Tyr-236 carries the post-translational modification Phosphotyrosine. Asp-245 is a binding site for Mg(2+). Position 263 is a phosphoserine (Ser-263). Glu-293 and Asp-318 together coordinate substrate. The Mg(2+) site is built by Glu-293 and Asp-318. The active-site Proton acceptor is Lys-343. Substrate is bound by residues 370–373 and Lys-394; that span reads SHRS.

This sequence belongs to the enolase family. As to quaternary structure, mammalian enolase is composed of 3 isozyme subunits, alpha, beta and gamma, which can form homodimers or heterodimers which are cell-type and development-specific. Interacts with PNKD. Mg(2+) is required as a cofactor. In terms of tissue distribution, the alpha/alpha homodimer is expressed in embryo and in most adult tissues. The alpha/beta heterodimer and the beta/beta homodimer are found in striated muscle, and the alpha/gamma heterodimer and the gamma/gamma homodimer in neurons.

The protein resides in the cytoplasm. It catalyses the reaction (2R)-2-phosphoglycerate = phosphoenolpyruvate + H2O. The protein operates within carbohydrate degradation; glycolysis; pyruvate from D-glyceraldehyde 3-phosphate: step 4/5. Its function is as follows. Glycolytic enzyme that catalyzes the conversion of 2-phosphoglycerate to phosphoenolpyruvate. Appears to have a function in striated muscle development and regeneration. This Rattus norvegicus (Rat) protein is Beta-enolase (Eno3).